The following is a 432-amino-acid chain: Adenylosuccinate synthetase (432 aa).

GTP contacts are provided by residues 16-22 and 44-46; these read GDEGKGK and GHM. Asp17 acts as the Proton acceptor in catalysis. Mg(2+)-binding residues include Asp17 and Gly44. Residues 17-20, 42-45, Thr132, Arg146, Gln226, Thr241, and Arg305 each bind IMP; these read DEGK and NAGH. The Proton donor role is filled by His45. Residue 301–307 participates in substrate binding; the sequence is LNTGRPR. GTP-binding positions include Arg307, 333-335, and 415-417; these read LFD and SVG.

This sequence belongs to the adenylosuccinate synthetase family. Homodimer. Requires Mg(2+) as cofactor.

Its subcellular location is the cytoplasm. It carries out the reaction IMP + L-aspartate + GTP = N(6)-(1,2-dicarboxyethyl)-AMP + GDP + phosphate + 2 H(+). It functions in the pathway purine metabolism; AMP biosynthesis via de novo pathway; AMP from IMP: step 1/2. Its function is as follows. Plays an important role in the de novo pathway of purine nucleotide biosynthesis. Catalyzes the first committed step in the biosynthesis of AMP from IMP. The sequence is that of Adenylosuccinate synthetase from Mycoplasma mycoides subsp. mycoides SC (strain CCUG 32753 / NCTC 10114 / PG1).